The sequence spans 404 residues: Major outer membrane porin (404 aa).

The first 22 residues, 1-22 (MKKLLKSVLAFAVLGSASSLHA), serve as a signal peptide directing secretion. Residues 85-110 (GPVPTTTDTDAAADITTSTPRENPAY) form a disordered region. The span at 89-103 (TTTDTDAAADITTST) shows a compositional bias: low complexity.

It belongs to the chlamydial porin (CP) (TC 1.B.2) family. In terms of assembly, part of a disulfide cross-linked outer membrane complex (COMC) composed of the major outer membrane porin (MOMP), the small cysteine-rich protein (OmcA) and the large cysteine-rich periplasmic protein (OmcB).

Its subcellular location is the cell outer membrane. In elementary bodies (EBs, the infectious stage, which is able to survive outside the host cell) provides the structural integrity of the outer envelope through disulfide cross-links with the small cysteine-rich protein and the large cysteine-rich periplasmic protein. It has been described in publications as the Sarkosyl-insoluble COMC (Chlamydia outer membrane complex), and serves as the functional equivalent of peptidoglycan. Its function is as follows. Permits diffusion of specific solutes through the outer membrane. The protein is Major outer membrane porin (ompA) of Chlamydia muridarum.